The following is a 142-amino-acid chain: Conidial pigment biosynthesis dehydratase EthD (142 aa).

One can recognise an EthD domain in the interval Pro-25–Ser-121.

It belongs to the tpcK family.

It functions in the pathway pigment biosynthesis. Functionally, dehydratase; part of the Pks1 gene cluster that mediates the biosynthesis of an anthraquinone derivative pigment that contributes to conidial pigmentation that provides protection from UV radiation, heat and cold stress. The polyketide synthase Pks1 produces 1-acetyl-2,4,6,8-tetrahydroxy-9,10-anthraquinone though condensation of acetyl-CoA with malonyl-CoA. The dehydratase EthD and the laccase Mlac1 further convert the anthraquinone derivative into the final conidial pigment. This Metarhizium robertsii (strain ARSEF 23 / ATCC MYA-3075) (Metarhizium anisopliae (strain ARSEF 23)) protein is Conidial pigment biosynthesis dehydratase EthD.